Here is a 501-residue protein sequence, read N- to C-terminus: Probable cytochrome P450 6a20 (501 aa).

Cysteine 445 serves as a coordination point for heme.

Belongs to the cytochrome P450 family. Requires heme as cofactor.

The protein resides in the endoplasmic reticulum membrane. It localises to the microsome membrane. May be involved in the metabolism of insect hormones and in the breakdown of synthetic insecticides. This is Probable cytochrome P450 6a20 (Cyp6a20) from Drosophila melanogaster (Fruit fly).